Reading from the N-terminus, the 192-residue chain is Epididymal-specific lipocalin-12 (192 aa).

The signal sequence occupies residues 1 to 19 (MRLLCGLWLWLSLLKVLQA). Cysteines 88 and 192 form a disulfide.

The protein belongs to the calycin superfamily. Lipocalin family. Monomer.

Its subcellular location is the secreted. Functionally, binds all-trans retinoic acid and may act as a retinoid carrier protein within the epididymis. May play a role in male fertility. The chain is Epididymal-specific lipocalin-12 (LCN12) from Homo sapiens (Human).